Here is a 751-residue protein sequence, read N- to C-terminus: Cyanobacterial phytochrome B (751 aa).

Cys17 is a binding site for a tetrapyrrole. Residues Ile22–Gln511 are chromophore binding domain. A GAF domain is found at Thr152–Glu320. In terms of domain architecture, Histidine kinase spans Ile536 to Val751. His539 bears the Phosphohistidine; by autocatalysis mark.

This sequence in the N-terminal section; belongs to the phytochrome family. Post-translationally, contains one covalently linked tetrapyrrole chromophore.

It catalyses the reaction ATP + protein L-histidine = ADP + protein N-phospho-L-histidine.. Photoreceptor which exists in two forms that are reversibly interconvertible by light: the R form that absorbs maximally in the red region of the spectrum and the FR form that absorbs maximally in the far-red region. This is Cyanobacterial phytochrome B (bphB) from Nostoc sp. (strain PCC 7120 / SAG 25.82 / UTEX 2576).